Consider the following 233-residue polypeptide: N-(5'-phosphoribosyl)anthranilate isomerase (233 aa).

The protein belongs to the TrpF family.

The catalysed reaction is N-(5-phospho-beta-D-ribosyl)anthranilate = 1-(2-carboxyphenylamino)-1-deoxy-D-ribulose 5-phosphate. Its pathway is amino-acid biosynthesis; L-tryptophan biosynthesis; L-tryptophan from chorismate: step 3/5. The protein is N-(5'-phosphoribosyl)anthranilate isomerase of Synechococcus sp. (strain JA-2-3B'a(2-13)) (Cyanobacteria bacterium Yellowstone B-Prime).